A 156-amino-acid chain; its full sequence is ATP synthase subunit b (156 aa).

A helical membrane pass occupies residues Leu-7 to Pro-27.

Belongs to the ATPase B chain family. In terms of assembly, F-type ATPases have 2 components, F(1) - the catalytic core - and F(0) - the membrane proton channel. F(1) has five subunits: alpha(3), beta(3), gamma(1), delta(1), epsilon(1). F(0) has three main subunits: a(1), b(2) and c(10-14). The alpha and beta chains form an alternating ring which encloses part of the gamma chain. F(1) is attached to F(0) by a central stalk formed by the gamma and epsilon chains, while a peripheral stalk is formed by the delta and b chains.

The protein resides in the cell inner membrane. F(1)F(0) ATP synthase produces ATP from ADP in the presence of a proton or sodium gradient. F-type ATPases consist of two structural domains, F(1) containing the extramembraneous catalytic core and F(0) containing the membrane proton channel, linked together by a central stalk and a peripheral stalk. During catalysis, ATP synthesis in the catalytic domain of F(1) is coupled via a rotary mechanism of the central stalk subunits to proton translocation. In terms of biological role, component of the F(0) channel, it forms part of the peripheral stalk, linking F(1) to F(0). In Polaromonas sp. (strain JS666 / ATCC BAA-500), this protein is ATP synthase subunit b.